Here is a 133-residue protein sequence, read N- to C-terminus: U-scoloptoxin(05)-Sa1a (133 aa).

Residues 1–24 (MPSLCIIALFGTLTFYTLIPSIHT) form the signal peptide.

It belongs to the scoloptoxin-05 family. Contains 5 disulfide bonds. As to expression, expressed by the venom gland.

It localises to the secreted. The polypeptide is U-scoloptoxin(05)-Sa1a (Scolopendra alternans (Florida Keys giant centipede)).